We begin with the raw amino-acid sequence, 195 residues long: 22.0 kDa heat shock protein (195 aa).

An N-terminal signal peptide occupies residues Met1 to Thr21. Residues Arg62–Glu180 form the sHSP domain. Asn160 carries N-linked (GlcNAc...) asparagine glycosylation.

Belongs to the small heat shock protein (HSP20) family. As to quaternary structure, may form oligomeric structures.

The protein resides in the endoplasmic reticulum. In Arabidopsis thaliana (Mouse-ear cress), this protein is 22.0 kDa heat shock protein (HSP22.0).